Consider the following 192-residue polypeptide: MYTARKKIQKDKGLEPSEFEDTVAQAFFDLENGNQELKSDVKDLYINAAFQMDVAGNRKAVVIHVPYRLRKNFRKIHVRLVRELEKKFSGKDVVIVATRRIVRPPKKGSAVVRPRTRTLTAVHDGLLEDVVYPAEIVGKRVRYRLDGSKIIKIFLDPMERNNTEYKLDTFTAVYRRLCGKDVVYEYPVAETA.

It belongs to the eukaryotic ribosomal protein eS7 family.

This chain is Small ribosomal subunit protein eS7 (RPS7), found in Secale cereale (Rye).